The sequence spans 142 residues: Putative pre-16S rRNA nuclease (142 aa).

Belongs to the YqgF nuclease family.

Its subcellular location is the cytoplasm. Could be a nuclease involved in processing of the 5'-end of pre-16S rRNA. In Lactobacillus delbrueckii subsp. bulgaricus (strain ATCC 11842 / DSM 20081 / BCRC 10696 / JCM 1002 / NBRC 13953 / NCIMB 11778 / NCTC 12712 / WDCM 00102 / Lb 14), this protein is Putative pre-16S rRNA nuclease.